Here is a 323-residue protein sequence, read N- to C-terminus: Beta-ketoacyl-[acyl-carrier-protein] synthase III (323 aa).

Catalysis depends on residues cysteine 114 and histidine 250. The tract at residues 251 to 255 (QANKR) is ACP-binding. Residue asparagine 280 is part of the active site.

It belongs to the thiolase-like superfamily. FabH family. In terms of assembly, homodimer.

It localises to the cytoplasm. It carries out the reaction malonyl-[ACP] + acetyl-CoA + H(+) = 3-oxobutanoyl-[ACP] + CO2 + CoA. It participates in lipid metabolism; fatty acid biosynthesis. Functionally, catalyzes the condensation reaction of fatty acid synthesis by the addition to an acyl acceptor of two carbons from malonyl-ACP. Catalyzes the first condensation reaction which initiates fatty acid synthesis and may therefore play a role in governing the total rate of fatty acid production. Possesses both acetoacetyl-ACP synthase and acetyl transacylase activities. Its substrate specificity determines the biosynthesis of branched-chain and/or straight-chain of fatty acids. This is Beta-ketoacyl-[acyl-carrier-protein] synthase III from Hyphomonas neptunium (strain ATCC 15444).